Consider the following 179-residue polypeptide: Large ribosomal subunit protein uL5 (179 aa).

Belongs to the universal ribosomal protein uL5 family. Part of the 50S ribosomal subunit; part of the 5S rRNA/L5/L18/L25 subcomplex. Contacts the 5S rRNA and the P site tRNA. Forms a bridge to the 30S subunit in the 70S ribosome.

Its function is as follows. This is one of the proteins that bind and probably mediate the attachment of the 5S RNA into the large ribosomal subunit, where it forms part of the central protuberance. In the 70S ribosome it contacts protein S13 of the 30S subunit (bridge B1b), connecting the 2 subunits; this bridge is implicated in subunit movement. Contacts the P site tRNA; the 5S rRNA and some of its associated proteins might help stabilize positioning of ribosome-bound tRNAs. The sequence is that of Large ribosomal subunit protein uL5 from Nitratidesulfovibrio vulgaris (strain DSM 19637 / Miyazaki F) (Desulfovibrio vulgaris).